Reading from the N-terminus, the 427-residue chain is Glutamate-1-semialdehyde 2,1-aminomutase (427 aa).

Lys265 carries the N6-(pyridoxal phosphate)lysine modification.

Belongs to the class-III pyridoxal-phosphate-dependent aminotransferase family. HemL subfamily. Homodimer. Pyridoxal 5'-phosphate is required as a cofactor.

It is found in the cytoplasm. The enzyme catalyses (S)-4-amino-5-oxopentanoate = 5-aminolevulinate. The protein operates within porphyrin-containing compound metabolism; protoporphyrin-IX biosynthesis; 5-aminolevulinate from L-glutamyl-tRNA(Glu): step 2/2. The protein is Glutamate-1-semialdehyde 2,1-aminomutase of Bordetella parapertussis (strain 12822 / ATCC BAA-587 / NCTC 13253).